Consider the following 256-residue polypeptide: Thiazole synthase (256 aa).

Lysine 95 (schiff-base intermediate with DXP) is an active-site residue. Residues glycine 156, 182–183, and 204–205 contribute to the 1-deoxy-D-xylulose 5-phosphate site; these read AG and NT.

The protein belongs to the ThiG family. As to quaternary structure, homotetramer. Forms heterodimers with either ThiH or ThiS.

The protein localises to the cytoplasm. It carries out the reaction [ThiS sulfur-carrier protein]-C-terminal-Gly-aminoethanethioate + 2-iminoacetate + 1-deoxy-D-xylulose 5-phosphate = [ThiS sulfur-carrier protein]-C-terminal Gly-Gly + 2-[(2R,5Z)-2-carboxy-4-methylthiazol-5(2H)-ylidene]ethyl phosphate + 2 H2O + H(+). It participates in cofactor biosynthesis; thiamine diphosphate biosynthesis. Functionally, catalyzes the rearrangement of 1-deoxy-D-xylulose 5-phosphate (DXP) to produce the thiazole phosphate moiety of thiamine. Sulfur is provided by the thiocarboxylate moiety of the carrier protein ThiS. In vitro, sulfur can be provided by H(2)S. The sequence is that of Thiazole synthase from Shigella dysenteriae serotype 1 (strain Sd197).